A 236-amino-acid polypeptide reads, in one-letter code: 2-C-methyl-D-erythritol 4-phosphate cytidylyltransferase (236 aa).

This sequence belongs to the IspD/TarI cytidylyltransferase family. IspD subfamily. In terms of assembly, homodimer.

It carries out the reaction 2-C-methyl-D-erythritol 4-phosphate + CTP + H(+) = 4-CDP-2-C-methyl-D-erythritol + diphosphate. Its pathway is isoprenoid biosynthesis; isopentenyl diphosphate biosynthesis via DXP pathway; isopentenyl diphosphate from 1-deoxy-D-xylulose 5-phosphate: step 2/6. Its function is as follows. Catalyzes the formation of 4-diphosphocytidyl-2-C-methyl-D-erythritol from CTP and 2-C-methyl-D-erythritol 4-phosphate (MEP). The sequence is that of 2-C-methyl-D-erythritol 4-phosphate cytidylyltransferase from Salmonella paratyphi C (strain RKS4594).